The following is a 200-amino-acid chain: Putative 3-methyladenine DNA glycosylase (200 aa).

This sequence belongs to the DNA glycosylase MPG family.

This is Putative 3-methyladenine DNA glycosylase from Shouchella clausii (strain KSM-K16) (Alkalihalobacillus clausii).